The sequence spans 492 residues: Variant surface glycoprotein MITAT 1.1 (492 aa).

An N-terminal signal peptide occupies residues 1 to 32; the sequence is MATGRAKNTKWARWLSTAGLIIVVTLPATTMA. Disulfide bonds link Cys-47–Cys-177 and Cys-155–Cys-222. Asn-298 and Asn-471 each carry an N-linked (GlcNAc...) asparagine glycan. Ser-475 is lipidated: GPI-anchor amidated serine. Positions 476-492 are cleaved as a propeptide — removed in mature form; it reads NSFLIHKAPLLLAFLLF.

The protein localises to the cell membrane. Its function is as follows. VSG forms a coat on the surface of the parasite. The trypanosome evades the immune response of the host by expressing a series of antigenically distinct VSGs from an estimated 1000 VSG genes. This is Variant surface glycoprotein MITAT 1.1 from Trypanosoma brucei brucei.